Consider the following 584-residue polypeptide: 2-succinyl-5-enolpyruvyl-6-hydroxy-3-cyclohexene-1-carboxylate synthase (584 aa).

This sequence belongs to the TPP enzyme family. MenD subfamily. As to quaternary structure, homodimer. Mg(2+) serves as cofactor. The cofactor is Mn(2+). Requires thiamine diphosphate as cofactor.

It catalyses the reaction isochorismate + 2-oxoglutarate + H(+) = 5-enolpyruvoyl-6-hydroxy-2-succinyl-cyclohex-3-ene-1-carboxylate + CO2. Its pathway is quinol/quinone metabolism; 1,4-dihydroxy-2-naphthoate biosynthesis; 1,4-dihydroxy-2-naphthoate from chorismate: step 2/7. The protein operates within quinol/quinone metabolism; menaquinone biosynthesis. In terms of biological role, catalyzes the thiamine diphosphate-dependent decarboxylation of 2-oxoglutarate and the subsequent addition of the resulting succinic semialdehyde-thiamine pyrophosphate anion to isochorismate to yield 2-succinyl-5-enolpyruvyl-6-hydroxy-3-cyclohexene-1-carboxylate (SEPHCHC). In Bacillus cereus (strain ATCC 10987 / NRS 248), this protein is 2-succinyl-5-enolpyruvyl-6-hydroxy-3-cyclohexene-1-carboxylate synthase.